Consider the following 397-residue polypeptide: Phosphoglycerate kinase (397 aa).

Residues 21–23 (DFN), R37, 60–63 (HLGR), R119, and R152 each bind substrate. ATP contacts are provided by residues K203, G294, E325, and 354–357 (GGDS).

Belongs to the phosphoglycerate kinase family. Monomer.

The protein resides in the cytoplasm. The catalysed reaction is (2R)-3-phosphoglycerate + ATP = (2R)-3-phospho-glyceroyl phosphate + ADP. Its pathway is carbohydrate degradation; glycolysis; pyruvate from D-glyceraldehyde 3-phosphate: step 2/5. The sequence is that of Phosphoglycerate kinase from Chlorobium luteolum (strain DSM 273 / BCRC 81028 / 2530) (Pelodictyon luteolum).